A 474-amino-acid chain; its full sequence is Hepatocyte nuclear factor 4-alpha (474 aa).

Residues 57–132 constitute a DNA-binding region (nuclear receptor); the sequence is SALCAICGDR…AGMKKEAVQN (76 aa). 2 NR C4-type zinc fingers span residues 60 to 80 and 96 to 120; these read CAICGDRATGKHYGASSCDGC and CRFSRQCVVDKDKRNQCRYCRLKKC. Residues serine 142 and serine 143 each carry the phosphoserine modification. At tyrosine 144 the chain carries Phosphotyrosine. In terms of domain architecture, NR LBD spans 147–377; it reads SSLPSINALL…NLLQEMLLGG (231 aa). Threonine 166 is modified (phosphothreonine). Serine 167 bears the Phosphoserine mark. Glycyl lysine isopeptide (Lys-Gly) (interchain with G-Cter in ubiquitin) cross-links involve residues lysine 234 and lysine 307. Serine 313 bears the Phosphoserine; by AMPK mark. A 9aaTAD motif is present at residues 368–376; it reads NLLQEMLLG. Residues 413–450 form a disordered region; it reads SNGQMCEWPRPRGQAATPETPQPSPPSGSGSESYKLLP. Residues threonine 429 and threonine 432 each carry the phosphothreonine modification. At serine 436 the chain carries Phosphoserine. Lysine 458 bears the N6-acetyllysine mark.

Belongs to the nuclear hormone receptor family. NR2 subfamily. Homodimerization is required for HNF4-alpha to bind to its recognition site. Interacts with CLOCK, BMAL1 and PER1. Interacts with PER2. Interacts with CRY1 and CRY2. Interacts with NR0B2/SHP; the resulting heterodimer is transcriptionally inactive. Interacts with DDX3X; this interaction disrupts the interaction between HNF4 and NR0B2 that forms inactive heterodimers and enhances the formation of active HNF4 homodimers. In terms of processing, phosphorylated on tyrosine residue(s); phosphorylation is important for its DNA-binding activity. Phosphorylation may directly or indirectly play a regulatory role in the subnuclear distribution. Phosphorylation at Ser-313 by AMPK reduces the ability to form homodimers and bind DNA. Acetylation at Lys-458 lowers transcriptional activation by about two-fold. In terms of tissue distribution, expressed in the liver, pancreas and colon in a circadian manner.

It localises to the nucleus. In terms of biological role, transcriptional regulator which controls the expression of hepatic genes during the transition of endodermal cells to hepatic progenitor cells, facilitatating the recruitment of RNA pol II to the promoters of target genes. Activates the transcription of CYP2C38. Represses the CLOCK-BMAL1 transcriptional activity and is essential for circadian rhythm maintenance and period regulation in the liver and colon cells. This chain is Hepatocyte nuclear factor 4-alpha (Hnf4a), found in Mus musculus (Mouse).